The primary structure comprises 476 residues: Sulfate adenylyltransferase subunit 1 (476 aa).

The region spanning 24–228 is the tr-type G domain; that stretch reads KSLLRFLTCG…MAWYQGPTLL (205 aa). A G1 region spans residues 33 to 40; sequence GSVDDGKS. Residue 33–40 participates in GTP binding; that stretch reads GSVDDGKS. Residues 91–95 form a G2 region; sequence GITID. Residues 112–115 form a G3 region; sequence DTPG. GTP-binding positions include 112 to 116 and 167 to 170; these read DTPGH and NKMD. A G4 region spans residues 167–170; the sequence is NKMD. A G5 region spans residues 205-207; that stretch reads SAL.

The protein belongs to the TRAFAC class translation factor GTPase superfamily. Classic translation factor GTPase family. CysN/NodQ subfamily. Heterodimer composed of CysD, the smaller subunit, and CysN.

The catalysed reaction is sulfate + ATP + H(+) = adenosine 5'-phosphosulfate + diphosphate. It functions in the pathway sulfur metabolism; hydrogen sulfide biosynthesis; sulfite from sulfate: step 1/3. Its function is as follows. With CysD forms the ATP sulfurylase (ATPS) that catalyzes the adenylation of sulfate producing adenosine 5'-phosphosulfate (APS) and diphosphate, the first enzymatic step in sulfur assimilation pathway. APS synthesis involves the formation of a high-energy phosphoric-sulfuric acid anhydride bond driven by GTP hydrolysis by CysN coupled to ATP hydrolysis by CysD. The protein is Sulfate adenylyltransferase subunit 1 of Vibrio vulnificus (strain CMCP6).